A 181-amino-acid polypeptide reads, in one-letter code: Large ribosomal subunit protein uL5 (181 aa).

It belongs to the universal ribosomal protein uL5 family. Part of the 50S ribosomal subunit; part of the 5S rRNA/L5/L18/L25 subcomplex. Contacts the 5S rRNA and the P site tRNA. Forms a bridge to the 30S subunit in the 70S ribosome.

Functionally, this is one of the proteins that bind and probably mediate the attachment of the 5S RNA into the large ribosomal subunit, where it forms part of the central protuberance. In the 70S ribosome it contacts protein S13 of the 30S subunit (bridge B1b), connecting the 2 subunits; this bridge is implicated in subunit movement. Contacts the P site tRNA; the 5S rRNA and some of its associated proteins might help stabilize positioning of ribosome-bound tRNAs. In Onion yellows phytoplasma (strain OY-M), this protein is Large ribosomal subunit protein uL5.